The following is a 220-amino-acid chain: Heptaprenyl diphosphate synthase component 1 (220 aa).

In terms of assembly, heterodimer of component I and II.

The catalysed reaction is 4 isopentenyl diphosphate + (2E,6E)-farnesyl diphosphate = all-trans-heptaprenyl diphosphate + 4 diphosphate. Its function is as follows. Supplies heptaprenyl diphosphate, the precursor for the side chain of the isoprenoid quinone menaquinone-7 (MQ-7). This Geobacillus stearothermophilus (Bacillus stearothermophilus) protein is Heptaprenyl diphosphate synthase component 1 (hepS).